The following is a 285-amino-acid chain: MKYIGAHVSAAGGLANAPARAAEIGATAFALFTKNQRQWRAAPLTPQVIDDFKIACEKYHFSAAQILPHDSYLINLGHPVSEALEKSRDAFLDEMQRCEQLGLTLLNFHPGSHLMQIAQEDCLARIAESINIALAQTEGVTAVIENTAGQGSNLGFEFEQLAAIIDGVEDKSRVGVCIDTCHAFAAGYDLRTPEACEKTFSEFGKIVGFQYLRGMHLNDAKSAFGSRVDRHHSLGEGNIGHDAFRWIMQDGRFDGIPLILETINPDIWAEEIAWLKAQQIAEAMA.

His69, His109, Glu145, Asp179, His182, His216, Asp229, His231, and Glu261 together coordinate Zn(2+).

The protein belongs to the AP endonuclease 2 family. Zn(2+) serves as cofactor.

The enzyme catalyses Endonucleolytic cleavage to 5'-phosphooligonucleotide end-products.. Functionally, endonuclease IV plays a role in DNA repair. It cleaves phosphodiester bonds at apurinic or apyrimidinic (AP) sites, generating a 3'-hydroxyl group and a 5'-terminal sugar phosphate. The polypeptide is Probable endonuclease 4 (Salmonella dublin (strain CT_02021853)).